Reading from the N-terminus, the 1665-residue chain is Protein scribble homolog (1665 aa).

Residues 1-804 (MLKCIPLWRC…MRVWRERMVE (804 aa)) are sufficient for targeting to adherens junction and to inhibit cell proliferation. Ser-37 bears the Phosphoserine mark. LRR repeat units follow at residues 37–58 (SLEE…FFRL), 60–81 (NLRK…VANF), 83–104 (QLVE…IKFC), 106–127 (ALEI…FTQL), 129–150 (SLAH…VGNL), 152–174 (NLVT…SFLV), 175–197 (KLEQ…GALP), 198–219 (NLRE…LGNL), 221–243 (RLVC…GGLA), 244–265 (LLTD…IGQL), 267–288 (QLSI…IGDC), 290–312 (NLSE…GKLT), 313–334 (KLTN…IGGC), 336–357 (ALSV…LAHT), 359–381 (ELHV…THLN), and 382–402 (LKAL…QTED). The residue at position 378 (Thr-378) is a Phosphothreonine. 2 disordered regions span residues 422-615 (PSLE…HFKI) and 635-689 (REGP…SAPS). A compositionally biased stretch (polar residues) spans 428–437 (GQQSSPSESC). The span at 452–463 (DTLEGEEDAEEA) shows a compositional bias: acidic residues. Positions 455 to 475 (EGEEDAEEAAAEKRGLQRRAT) form a coiled coil. Thr-475 is modified (phosphothreonine). Basic and acidic residues-rich tracts occupy residues 479–494 (SELK…RRNE) and 570–580 (FAEDTLIPRED). Ser-583 carries the phosphoserine modification. A coiled-coil region spans residues 653-687 (RAHEEEEEEEEENRDEEEGEATTEEDDKEEAVASA). Over residues 657–681 (EEEEEEEENRDEEEGEATTEEDDKE) the composition is skewed to acidic residues. Residues Thr-674 and Thr-675 each carry the phosphothreonine modification. Phosphoserine is present on residues Ser-694 and Ser-750. An interaction with ARHGEF7 region spans residues 703–1215 (IEPARIEEEE…SLESISSIDR (513 aa)). The 88-residue stretch at 714–801 (TLTIVRQTGG…AVQMRVWRER (88 aa)) folds into the PDZ 1 domain. Residues 714–1180 (TLTIVRQTGG…TVLVCDGFDT (467 aa)) are required for interaction with VIM. At Thr-812 the chain carries Phosphothreonine. Residues Ser-821, Ser-861, and Ser-925 each carry the phosphoserine modification. 3 PDZ domains span residues 848-936 (AACL…ERET), 990-1079 (EICL…RRDP), and 1086-1180 (ELCI…GFDT). 8 positions are modified to phosphoserine: Ser-1126, Ser-1206, Ser-1209, Ser-1212, Ser-1218, Ser-1262, Ser-1265, and Ser-1284. Residues 1213–1228 (IDRELSPEGPGKEKEL) show a composition bias toward basic and acidic residues. The disordered stretch occupies residues 1213-1246 (IDRELSPEGPGKEKELASQALPWESESAETTGRN). Disordered regions lie at residues 1263–1325 (AGSL…DELP) and 1341–1501 (VHPP…AERR). The segment covering 1264–1277 (GSLQRGPSATTGGK) has biased composition (polar residues). The residue at position 1291 (Lys-1291) is an Omega-N-methylarginine. A Phosphoserine modification is found at Ala-1299. An Omega-N-methylarginine modification is found at Arg-1312. Residue Ser-1320 is modified to Phosphoserine. Thr-1353 carries the post-translational modification Phosphothreonine. Position 1359 is a phosphoserine (Ser-1359). The segment covering 1364–1376 (SFRERQKYFELEV) has biased composition (basic and acidic residues). Residue Ser-1389 is modified to Phosphoserine. A coiled-coil region spans residues 1390–1421 (LVGADDLRKMQEEEARKLQQKRAQMLREEAVT). Positions 1394–1406 (DDLRKMQEEEARK) are enriched in basic and acidic residues. Phosphoserine occurs at positions 1455 and 1458. A compositionally biased stretch (basic and acidic residues) spans 1471–1482 (AKAERRHQERLR). Phosphoserine occurs at positions 1485, 1496, and 1518. The interval 1530 to 1577 (LSKSQEGRGKRGPLERLAEAPSPAPTPSPTPLEDFGLQTSASPGRLPL) is disordered. Residues 1534–1547 (QEGRGKRGPLERLA) are compositionally biased toward basic and acidic residues. At Ser-1551 the chain carries Phosphoserine. At Thr-1555 the chain carries Phosphothreonine. Phosphoserine occurs at positions 1557, 1571, and 1601. A disordered region spans residues 1632–1665 (GRPSPGAVGPEDMTLCSSRRSVRPGRRGLGPVPS).

It belongs to the LAP (LRR and PDZ) protein family. As to quaternary structure, interacts with UBE3A. Interacts with PAK1 and PAK2. Interacts (via PDZ domains) with VANGL2. Interacts (via PDZ domains) with LPP and TRIP6; the interaction is direct. Interacts (via PDZ domains) with TJP2. Interacts (via PDZ domains) with APC; may mediate APC targeting to adherens junctions of epithelial cells. Interacts (via PDZ domains) with TSHR; regulates TSHR trafficking and function. Interacts with ARHGEF7 and GIT1; interacts directly with ARHGEF7. Interacts with CTNNB1. Interacts with MAPK12. Interacts (via PDZ domains 1 and 3) with MCC. Interacts with DLG5. Interacts with STK4/MST1 and LATS1 in the presence of DLG5. Interacts (via PDZ domain 3) with CRTAM (via PDZ-binding motif); the interaction promotes CRTAM and SCRIB polarization in a subset of CD4+ T-cells. Interacts with YES1, when YES1 is in a closed conformation; the interaction facilitates YES1 autophosphorylation. Interacts (via PDZ domains) with VIM; the interaction protects SCRIB from proteasomal degradation and facilitates SCRIB localization to intermediate filaments, the interaction is reduced by cell contact inhibition. Ubiquitinated; targeted for UBE3A-dependent multiubiquitination and degraded. Post-translationally, palmitoylated. Could be depalmitoylated by LYPLA1 and/or LYPLA2. Palmitoylation of SCRIB by ZDHHC7 is required for its localization to cell-cell junctions, function in the establishement of epithelial cell polarity and the regulation of downstream signaling pathways important for epithelial cell differentiation. In terms of tissue distribution, expressed in CD4+ T-cells (at protein level). Found in a wide range of tissues including liver, kidney and spleen. Also expressed in the brain (at protein level).

The protein resides in the cell membrane. The protein localises to the cell junction. It is found in the adherens junction. It localises to the cell projection. Its subcellular location is the lamellipodium. The protein resides in the cytoplasm. The protein localises to the postsynapse. It is found in the presynapse. Scaffold protein involved in different aspects of polarized cell differentiation regulating epithelial and neuronal morphogenesis and T-cell polarization. Via its interaction with CRTAM, required for the late phase polarization of a subset of CD4+ T-cells, which in turn regulates TCR-mediated proliferation and IFNG and IL22 production. Plays a role in cell directional movement, cell orientation, cell sheet organization and Golgi complex polarization at the cell migration front. Promotes epithelial cell layer barrier function via maintaining cell-cell adhesion. Most probably functions in the establishment of apico-basal cell polarity. May function in cell proliferation regulating progression from G1 to S phase and as a positive regulator of apoptosis for instance during acinar morphogenesis of the mammary epithelium. May regulate cell invasion via MAPK-mediated cell migration and adhesion. May play a role in exocytosis and in the targeting of synaptic vesicles to synapses. Functions as an activator of Rac GTPase activity. This chain is Protein scribble homolog, found in Mus musculus (Mouse).